The following is a 248-amino-acid chain: DNA repair protein RecO (248 aa).

It belongs to the RecO family.

In terms of biological role, involved in DNA repair and RecF pathway recombination. This is DNA repair protein RecO from Bacillus cytotoxicus (strain DSM 22905 / CIP 110041 / 391-98 / NVH 391-98).